Consider the following 379-residue polypeptide: Alcohol dehydrogenase class-P (379 aa).

At Ser2 the chain carries N-acetylserine. Cys47 serves as a coordination point for Zn(2+). Thr49 is a binding site for an alcohol. Thr49 is an NAD(+) binding site. Zn(2+) is bound by residues Asp50, His69, Glu70, Cys99, Cys102, Cys105, Cys113, and Cys177. An an alcohol-binding site is contributed by His69. Positions 206 and 226 each coordinate NAD(+). Ser229 is subject to Phosphoserine. Positions 231, 272, 295, 297, 320, 322, and 372 each coordinate NAD(+).

This sequence belongs to the zinc-containing alcohol dehydrogenase family. Class-P subfamily. As to quaternary structure, homodimer. Requires Zn(2+) as cofactor. In terms of processing, glutathionylated. In terms of tissue distribution, root specific. Also detected in etiolated seedlings and leaves in cold conditions.

It is found in the cytoplasm. The catalysed reaction is a primary alcohol + NAD(+) = an aldehyde + NADH + H(+). It catalyses the reaction a secondary alcohol + NAD(+) = a ketone + NADH + H(+). It carries out the reaction ethanol + NAD(+) = acetaldehyde + NADH + H(+). Alcohol dehydrogenase activity show inverse correlation with the decreasing availability of oxygen. Slightly repressed by thiol-modifying agents N-ethylmaleimide (NEM) and 5,5-dithio-bis-(2-nitrobenzoic acid) (DTNB), as well as by methyl methanethiosulfonate (MMTS) in a dose-dependent manner. Inhibited by hydrogen peroxide H(2)O(2). Its function is as follows. Alcohol dehydrogenase catalyzing the reduction of toxic aldehydes to the corresponding alcohols. Mostly active on ethanol (EtOH), but exhibits broad substrate selectivity for primary and secondary alcohols (e.g. cinnamyl alcohol, octanol, geraniol, butanol, propyl alcohol, pentanol, isopentanol, ethylene glycol, isopropanol, methanol and tertiary butyl alcohol). Also catalyzes the reverse reaction to convert allyl alcohol to highly toxic acryl-aldehyde. Required for survival and acclimation in hypoxic conditions, especially in roots. Not able to catalyze NADH-dependent degradation of S-nitrosoglutathione (GSNO). This chain is Alcohol dehydrogenase class-P, found in Arabidopsis thaliana (Mouse-ear cress).